The following is a 304-amino-acid chain: MNKTLKIATRQSPLALWQAQHVKSRLEKIYPNLTVILVKITTKGDQILNSSLSKIGGKGLFIKELEISIMKGMSDIAVHSMKDVPYEIPQEFELGAILKCENPFDAFVSNHFSSIDDLPKNAKVGTCSMRRILQLKVIRPDLQIIDLRGNVNTRLKKLDDGEFDAIILACAGLIRLGFGNRIKQQIPENQNLPAVGQGAIGIEIRENDKEILDLIKPLIDIETSYRIIAERAMNTQLEGGCSVPVAGFATINNKQITLTGLVGNIDTGVILKEKIFGHVSQAEILGIELANKLILLGAKDILKD.

S-(dipyrrolylmethanemethyl)cysteine is present on Cys241.

Belongs to the HMBS family. Monomer. Dipyrromethane serves as cofactor.

The enzyme catalyses 4 porphobilinogen + H2O = hydroxymethylbilane + 4 NH4(+). It functions in the pathway porphyrin-containing compound metabolism; protoporphyrin-IX biosynthesis; coproporphyrinogen-III from 5-aminolevulinate: step 2/4. Tetrapolymerization of the monopyrrole PBG into the hydroxymethylbilane pre-uroporphyrinogen in several discrete steps. The polypeptide is Porphobilinogen deaminase (Vesicomyosocius okutanii subsp. Calyptogena okutanii (strain HA)).